Here is a 1607-residue protein sequence, read N- to C-terminus: MTGGGRAALALQPRGRLWPLLAVLAAVAGCVRAAMDECADEGGRPQRCMPEFVNAAFNVTVVATNTCGTPPEEYCVQTGVTGVTKSCHLCDAGQQHLQHGAAFLTDYNNQADTTWWQSQTMLAGVQYPNSINLTLHLGKAFDITYVRLKFHTSRPESFAIYKRTREDGPWIPYQYYSGSCENTYSKANRGFIRTGGDEQQALCTDEFSDISPLTGGNVAFSTLEGRPSAYNFDNSPVLQEWVTATDIRVTLNRLNTFGDEVFNEPKVLKSYYYAISDFAVGGRCKCNGHASECVKNEFDKLMCNCKHNTYGVDCEKCLPFFNDRPWRRATAESASESLPCDCNGRSQECYFDPELYRSTGHGGHCTNCRDNTDGAKCERCRENFFRLGNTEACSPCHCSPVGSLSTQCDSYGRCSCKPGVMGDKCDRCQPGFHSLTEAGCRPCSCDLRGSTDECNVETGRCVCKDNVEGFNCERCKPGFFNLESSNPKGCTPCFCFGHSSVCTNAVGYSVYDISSTFQIDEDGWRVEQRDGSEASLEWSSDRQDIAVISDSYFPRYFIAPVKFLGNQVLSYGQNLSFSFRVDRRDTRLSAEDLVLEGAGLRVSVPLIAQGNSYPSETTVKYIFRLHEATDYPWRPALSPFEFQKLLNNLTSIKIRGTYSERTAGYLDDVTLQSARPGPGVPATWVESCTCPVGYGGQFCETCLPGYRRETPSLGPYSPCVLCTCNGHSETCDPETGVCDCRDNTAGPHCEKCSDGYYGDSTLGTSSDCQPCPCPGGSSCAIVPKTKEVVCTHCPTGTAGKRCELCDDGYFGDPLGSNGPVRLCRPCQCNDNIDPNAVGNCNRLTGECLKCIYNTAGFYCDRCKEGFFGNPLAPNPADKCKACACNPYGTVQQQSSCNPVTGQCQCLPHVSGRDCGTCDPGYYNLQSGQGCERCDCHALGSTNGQCDIRTGQCECQPGITGQHCERCETNHFGFGPEGCKPCDCHHEGSLSLQCKDDGRCECREGFVGNRCDQCEENYFYNRSWPGCQECPACYRLVKDKAAEHRVKLQELESLIANLGTGDDMVTDQAFEDRLKEAEREVTDLLREAQEVKDVDQNLMDRLQRVNSSLHSQISRLQNIRNTIEETGILAERARSRVESTEQLIEIASRELEKAKMAAANVSITQPESTGEPNNMTLLAEEARRLAERHKQEADDIVRVAKTANETSAEAYNLLLRTLAGENQTALEIEELNRKYEQAKNISQDLEKQAARVHEEAKRAGDKAVEIYASVAQLTPVDSEALENEANKIKKEAADLDRLIDQKLKDYEDLREDMRGKEHEVKNLLEKGKAEQQTADQLLARADAAKALAEEAAKKGRSTLQEANDILNNLKDFDRRVNDNKTAAEEALRRIPAINRTIAEANEKTREAQLALGNAAADATEAKNKAHEAERIASAVQKNATSTKADAERTFGEVTDLDNEVNGMLRQLEEAENELKRKQDDADQDMMMAGMASQAAQEAELNARKAKNSVSSLLSQLNNLLDQLGQLDTVDLNKLNEIEGSLNKAKDEMKASDLDRKVSDLESEARKQEAAIMDYNRDIAEIIKDIHNLEDIKKTLPTGCFNTPSIEKP.

Positions 1–33 (MTGGGRAALALQPRGRLWPLLAVLAAVAGCVRA) are cleaved as a signal peptide. One can recognise a Laminin N-terminal domain in the interval 44 to 283 (RPQRCMPEFV…AISDFAVGGR (240 aa)). N58 and N132 each carry an N-linked (GlcNAc...) asparagine glycan. Disulfide bonds link C284/C293, C286/C303, C305/C314, C340/C349, C342/C365, C368/C377, C380/C393, C396/C408, C398/C414, C416/C425, C428/C440, C443/C454, C445/C461, C463/C472, and C475/C490. Laminin EGF-like domains lie at 284–339 (CKCN…ESLP), 340–395 (CDCN…ACSP), 396–442 (CHCS…GCRP), and 443–492 (CSCD…GCTP). A Laminin EGF-like 5; first part domain is found at 493-502 (CFCFGHSSVC). The Laminin IV type A domain maps to 512 to 687 (DISSTFQIDE…PGVPATWVES (176 aa)). Residues N574 and N648 are each glycosylated (N-linked (GlcNAc...) asparagine). In terms of domain architecture, Laminin EGF-like 5; second part spans 688-721 (CTCPVGYGGQFCETCLPGYRRETPSLGPYSPCVL). 24 cysteine pairs are disulfide-bonded: C722–C731, C724–C738, C740–C749, C752–C768, C771–C779, C773–C790, C793–C802, C805–C823, C826–C840, C828–C847, C850–C859, C862–C879, C882–C896, C884–C903, C905–C914, C917–C930, C933–C945, C935–C952, C954–C963, C966–C978, C981–C993, C983–C999, C1001–C1010, and C1013–C1026. Laminin EGF-like domains follow at residues 722-770 (CTCN…DCQP) and 771-825 (CPCP…LCRP). The Laminin EGF-like 8; nidogen-binding domain maps to 826-881 (CQCNDNIDPNAVGNCNRLTGECLKCIYNTAGFYCDRCKEGFFGNPLAPNPADKCKA). Laminin EGF-like domains lie at 882-932 (CACN…GCER), 933-980 (CDCH…GCKP), and 981-1028 (CDCH…GCQE). N-linked (GlcNAc...) asparagine glycans are attached at residues N1020 and N1105. The domain II and I stretch occupies residues 1029 to 1607 (CPACYRLVKD…CFNTPSIEKP (579 aa)). A coiled-coil region spans residues 1034 to 1594 (RLVKDKAAEH…HNLEDIKKTL (561 aa)). S1147 is subject to Phosphoserine. 8 N-linked (GlcNAc...) asparagine glycosylation sites follow: N1159, N1173, N1203, N1221, N1239, N1378, N1393, and N1437. The residue at position 1491 (S1491) is a Phosphoserine.

In terms of assembly, laminin is a complex glycoprotein, consisting of three different polypeptide chains (alpha, beta, gamma), which are bound to each other by disulfide bonds into a cross-shaped molecule comprising one long and three short arms with globules at each end. Gamma-1 is a subunit of laminin-1 (laminin-111 or EHS laminin), laminin-2 (laminin-211 or merosin), laminin-3 (laminin-121 or S-laminin), laminin-4 (laminin-221 or S-merosin), laminin-6 (laminin-311 or K-laminin), laminin-7 (laminin-321 or KS-laminin), laminin-8 (laminin-411), laminin-9 (laminin-421), laminin-10 (laminin-511) and laminin-11 (laminin-521). Interacts with SVEP1. As to expression, found in the basement membranes (major component).

It is found in the secreted. Its subcellular location is the extracellular space. It localises to the extracellular matrix. The protein resides in the basement membrane. Its function is as follows. Binding to cells via a high affinity receptor, laminin is thought to mediate the attachment, migration and organization of cells into tissues during embryonic development by interacting with other extracellular matrix components. The chain is Laminin subunit gamma-1 (Lamc1) from Mus musculus (Mouse).